Here is an 882-residue protein sequence, read N- to C-terminus: Nitrogen regulatory protein areA (882 aa).

Gly residues predominate over residues 1 to 13 (MSGLTLGGGGSGG). Disordered stretches follow at residues 1–75 (MSGL…PDSL), 139–191 (KRKE…LTSD), 228–257 (SRKD…SEFG), 325–344 (NNHS…FGLD), 394–422 (STDF…EHSM), 461–545 (NQDQ…DMNG), and 579–675 (MDTP…GPTT). Residues 48 to 59 (SDFSQLSDDFSF) are compositionally biased toward low complexity. Polar residues-rich tracts occupy residues 156–169 (NSVS…QLTS) and 177–191 (PTRQ…LTSD). Residues 325–334 (NNHSSSHHNH) are compositionally biased toward basic residues. 2 stretches are compositionally biased toward polar residues: residues 394–413 (STDF…STPQ) and 492–503 (QVLNPNDFSTGA). The span at 604 to 613 (VRNREQDPRR) shows a compositional bias: basic and acidic residues. A compositionally biased stretch (polar residues) spans 617–642 (ARTTSTPNTAQLLRQSMNANTSHTSP). The GATA-type zinc finger occupies 676-700 (CTNCFTQTTPLWRRNPEGQPLCNAC). A disordered region spans residues 723 to 871 (RNRSSANSLA…NHSIAGGQGA (149 aa)). A compositionally biased stretch (low complexity) spans 745 to 759 (KNSVQQTTVTTPTSS). Over residues 795-811 (NPTTSSPGQSRGTSSVQ) the composition is skewed to polar residues. Residues 848–861 (ALAPAMPPAAANPA) show a composition bias toward low complexity.

It is found in the nucleus. In terms of biological role, major nitrogen regulatory protein. Positively acting regulatory gene of nitrogen metabolite repression. In Aspergillus niger, this protein is Nitrogen regulatory protein areA (areA).